Consider the following 820-residue polypeptide: DNA mismatch repair protein MutS (820 aa).

615-622 (GPNMAGKS) provides a ligand contact to ATP.

It belongs to the DNA mismatch repair MutS family.

Functionally, this protein is involved in the repair of mismatches in DNA. It is possible that it carries out the mismatch recognition step. This protein has a weak ATPase activity. This is DNA mismatch repair protein MutS from Anaplasma phagocytophilum (strain HZ).